The sequence spans 169 residues: PTS system glucose-specific EIIA component (169 aa).

In terms of domain architecture, PTS EIIA type-1 spans 39-143; that stretch reads DVVFAEKIVG…STLTPVVISN (105 aa). 2 residues coordinate Zn(2+): His76 and His91. His91 (tele-phosphohistidine intermediate; for EIIA activity) is an active-site residue. His91 carries the post-translational modification Phosphohistidine; by HPr.

As to quaternary structure, heterodimer with glycerol kinase (glpk). It depends on Zn(2+) as a cofactor.

It localises to the cytoplasm. The phosphoenolpyruvate-dependent sugar phosphotransferase system (sugar PTS), a major carbohydrate active transport system, catalyzes the phosphorylation of incoming sugar substrates concomitantly with their translocation across the cell membrane. The enzyme II complex composed of PtsG and Crr is involved in glucose transport. The chain is PTS system glucose-specific EIIA component (crr) from Escherichia coli O6:H1 (strain CFT073 / ATCC 700928 / UPEC).